Here is a 149-residue protein sequence, read N- to C-terminus: Protein FAM72B (149 aa).

This sequence belongs to the FAM72 family.

The chain is Protein FAM72B (FAM72B) from Homo sapiens (Human).